A 564-amino-acid chain; its full sequence is Bifunctional protein CrtB/UppS (564 aa).

D329 is an active-site residue. D329 contacts Mg(2+). Residues 330-333 (GNRR), W334, H346, and 374-376 (STE) each bind substrate. Residue N377 is the Proton acceptor of the active site. Residues W378, R380, R497, and 502 to 504 (RIS) each bind substrate. A Mg(2+)-binding site is contributed by E515.

The protein in the N-terminal section; belongs to the phytoene/squalene synthase family. In the C-terminal section; belongs to the UPP synthase family. In terms of assembly, homodimer. Mg(2+) is required as a cofactor.

The catalysed reaction is 2 (2E,6E,10E)-geranylgeranyl diphosphate = 15-cis-phytoene + 2 diphosphate. Its pathway is carotenoid biosynthesis; phytoene biosynthesis; all-trans-phytoene from geranylgeranyl diphosphate: step 1/1. Its function is as follows. Catalyzes the reaction from prephytoene diphosphate to phytoene. Catalyzes the condensation of isopentenyl diphosphate (IPP) with allylic pyrophosphates generating different type of terpenoids. This is Bifunctional protein CrtB/UppS (crtB/uppS3) from Streptomyces coelicolor (strain ATCC BAA-471 / A3(2) / M145).